The primary structure comprises 422 residues: Zinc finger protein zfp-2 (422 aa).

The segment at Ala-95 to Val-119 is disordered. The segment covering Thr-99 to Ser-113 has biased composition (low complexity). 7 C2H2-type zinc fingers span residues Tyr-171–His-194, Phe-200–His-222, Phe-229–His-251, Ser-255–His-278, Tyr-300–His-322, Tyr-328–His-350, and Tyr-356–His-379.

Expressed in vulval cells and all somatic gonad structures such as spermatheca, sheath cells, uterine cells and distal tip cells.

It is found in the nucleus. Functionally, probable zinc finger transcription factor that acts as a transcriptional repressor. Acts redundantly with the transcriptional repressor lin-35 to control the development of somatic gonad lineages. May, in addition, suppress sensitivity to RNAi. The protein is Zinc finger protein zfp-2 of Caenorhabditis elegans.